The primary structure comprises 1379 residues: DNA-directed RNA polymerase subunit beta'' (1379 aa).

Zn(2+)-binding residues include C220, C293, C300, and C303.

It belongs to the RNA polymerase beta' chain family. RpoC2 subfamily. In terms of assembly, in plastids the minimal PEP RNA polymerase catalytic core is composed of four subunits: alpha, beta, beta', and beta''. When a (nuclear-encoded) sigma factor is associated with the core the holoenzyme is formed, which can initiate transcription. It depends on Zn(2+) as a cofactor.

The protein resides in the plastid. Its subcellular location is the chloroplast. The enzyme catalyses RNA(n) + a ribonucleoside 5'-triphosphate = RNA(n+1) + diphosphate. Functionally, DNA-dependent RNA polymerase catalyzes the transcription of DNA into RNA using the four ribonucleoside triphosphates as substrates. The sequence is that of DNA-directed RNA polymerase subunit beta'' from Olimarabidopsis pumila (Dwarf rocket).